The following is a 450-amino-acid chain: Coiled-coil domain-containing protein 149-A (450 aa).

2 coiled-coil regions span residues 1-197 (MANQ…DRRK) and 259-286 (IQHQ…LEIS). The disordered stretch occupies residues 290 to 358 (SLPDDRTGRG…NGQVGTQLKE (69 aa)). A compositionally biased stretch (polar residues) spans 343 to 354 (PSGTRTNGQVGT).

The protein belongs to the CCDC149 family.

This is Coiled-coil domain-containing protein 149-A (ccdc149a) from Danio rerio (Zebrafish).